A 122-amino-acid chain; its full sequence is Acidic phospholipase A2 2 (122 aa).

7 disulfides stabilise this stretch: Cys-26–Cys-115, Cys-28–Cys-44, Cys-43–Cys-95, Cys-49–Cys-122, Cys-50–Cys-88, Cys-57–Cys-81, and Cys-75–Cys-86. Residues Tyr-27, Gly-29, and Gly-31 each coordinate Ca(2+). His-47 is an active-site residue. Position 48 (Asp-48) interacts with Ca(2+). Residue Asp-89 is part of the active site.

Belongs to the phospholipase A2 family. Group II subfamily. D49 sub-subfamily. The cofactor is Ca(2+). Expressed by the venom gland.

It localises to the secreted. The catalysed reaction is a 1,2-diacyl-sn-glycero-3-phosphocholine + H2O = a 1-acyl-sn-glycero-3-phosphocholine + a fatty acid + H(+). Its function is as follows. Snake venom phospholipase A2 (PLA2) that has high lipolytic activity. PLA2 catalyzes the calcium-dependent hydrolysis of the 2-acyl groups in 3-sn-phosphoglycerides. This is Acidic phospholipase A2 2 from Craspedocephalus gramineus (Bamboo pit viper).